The sequence spans 459 residues: Ribulose bisphosphate carboxylase (459 aa).

Asparagine 111 contributes to the substrate binding site. Lysine 166 functions as the Proton acceptor in the catalytic mechanism. Lysine 168 contacts substrate. 3 residues coordinate Mg(2+): lysine 191, aspartate 193, and glutamate 194. Lysine 191 is modified (N6-carboxylysine). Histidine 287 (proton acceptor) is an active-site residue. Residues arginine 288, histidine 321, and serine 368 each coordinate substrate.

This sequence belongs to the RuBisCO large chain family. Type II subfamily. In terms of assembly, homodimer. It depends on Mg(2+) as a cofactor.

It localises to the cytoplasm. It catalyses the reaction 2 (2R)-3-phosphoglycerate + 2 H(+) = D-ribulose 1,5-bisphosphate + CO2 + H2O. The enzyme catalyses D-ribulose 1,5-bisphosphate + O2 = 2-phosphoglycolate + (2R)-3-phosphoglycerate + 2 H(+). In terms of biological role, ruBisCO catalyzes two reactions: the carboxylation of D-ribulose 1,5-bisphosphate, the primary event in carbon dioxide fixation, as well as the oxidative fragmentation of the pentose substrate. Both reactions occur simultaneously and in competition at the same active site. This Halothiobacillus neapolitanus (strain ATCC 23641 / c2) (Thiobacillus neapolitanus) protein is Ribulose bisphosphate carboxylase.